The chain runs to 190 residues: Transcription termination/antitermination protein NusG (190 aa).

Positions 138–166 (VGEIVTVTEGPFETFTGTVEEVDQEKARL) constitute a KOW domain.

The protein belongs to the NusG family.

Participates in transcription elongation, termination and antitermination. This Rickettsia bellii (strain RML369-C) protein is Transcription termination/antitermination protein NusG.